Reading from the N-terminus, the 108-residue chain is UPF0060 membrane protein YnfA (108 aa).

Residues 1–5 (MIKTT) lie on the Periplasmic side of the membrane. A helical membrane pass occupies residues 6–26 (LLFFATALCEIIGCFLPWLWL). Topologically, residues 27-30 (KRNA) are cytoplasmic. Residues 31–51 (SIWLLLPAGISLALFVWLLTL) traverse the membrane as a helical segment. At 52-60 (HPAASGRVY) the chain is on the periplasmic side. The helical transmembrane segment at 61–81 (AAYGGVYVCTALIWLRVVDGV) threads the bilayer. At 82-84 (KLS) the chain is on the cytoplasmic side. A helical membrane pass occupies residues 85 to 105 (LYDWTGALIALCGMLIIVAGW). Residues 106-108 (GRT) lie on the Periplasmic side of the membrane.

The protein belongs to the UPF0060 family.

It is found in the cell inner membrane. The polypeptide is UPF0060 membrane protein YnfA (Escherichia coli (strain SMS-3-5 / SECEC)).